The primary structure comprises 311 residues: 4-hydroxy-tetrahydrodipicolinate synthase (311 aa).

Residue threonine 51 participates in pyruvate binding. Tyrosine 140 serves as the catalytic Proton donor/acceptor. Residue lysine 168 is the Schiff-base intermediate with substrate of the active site. Isoleucine 209 contributes to the pyruvate binding site.

It belongs to the DapA family. In terms of assembly, homotetramer; dimer of dimers.

It localises to the cytoplasm. The catalysed reaction is L-aspartate 4-semialdehyde + pyruvate = (2S,4S)-4-hydroxy-2,3,4,5-tetrahydrodipicolinate + H2O + H(+). It functions in the pathway amino-acid biosynthesis; L-lysine biosynthesis via DAP pathway; (S)-tetrahydrodipicolinate from L-aspartate: step 3/4. Functionally, catalyzes the condensation of (S)-aspartate-beta-semialdehyde [(S)-ASA] and pyruvate to 4-hydroxy-tetrahydrodipicolinate (HTPA). The sequence is that of 4-hydroxy-tetrahydrodipicolinate synthase from Streptococcus gordonii (strain Challis / ATCC 35105 / BCRC 15272 / CH1 / DL1 / V288).